Here is a 61-residue protein sequence, read N- to C-terminus: Probable pancreatic secretory proteinase inhibitor (61 aa).

The region spanning L6–C61 is the Kazal-like domain. 3 cysteine pairs are disulfide-bonded: C12–C43, C21–C40, and C29–C61.

It localises to the secreted. The protein is Probable pancreatic secretory proteinase inhibitor of Anguilla anguilla (European freshwater eel).